Here is a 508-residue protein sequence, read N- to C-terminus: Putative glycosyl hydrolase ecdF (508 aa).

The signal sequence occupies residues 1–15 (MFLHILCLLAGQALA). 4 N-linked (GlcNAc...) asparagine glycosylation sites follow: N99, N122, N275, and N362.

Belongs to the glycosyl hydrolase 32 family.

The chain is Putative glycosyl hydrolase ecdF from Aspergillus rugulosus (Emericella rugulosa).